We begin with the raw amino-acid sequence, 139 residues long: ATP synthase epsilon chain (139 aa).

The protein belongs to the ATPase epsilon chain family. As to quaternary structure, F-type ATPases have 2 components, CF(1) - the catalytic core - and CF(0) - the membrane proton channel. CF(1) has five subunits: alpha(3), beta(3), gamma(1), delta(1), epsilon(1). CF(0) has three main subunits: a, b and c.

The protein resides in the cell inner membrane. Its function is as follows. Produces ATP from ADP in the presence of a proton gradient across the membrane. This chain is ATP synthase epsilon chain, found in Salmonella typhimurium (strain LT2 / SGSC1412 / ATCC 700720).